Consider the following 317-residue polypeptide: Transaldolase (317 aa).

The active-site Schiff-base intermediate with substrate is the Lys-132.

Belongs to the transaldolase family. Type 1 subfamily. As to quaternary structure, homodimer.

The protein resides in the cytoplasm. It catalyses the reaction D-sedoheptulose 7-phosphate + D-glyceraldehyde 3-phosphate = D-erythrose 4-phosphate + beta-D-fructose 6-phosphate. It participates in carbohydrate degradation; pentose phosphate pathway; D-glyceraldehyde 3-phosphate and beta-D-fructose 6-phosphate from D-ribose 5-phosphate and D-xylulose 5-phosphate (non-oxidative stage): step 2/3. Transaldolase is important for the balance of metabolites in the pentose-phosphate pathway. This is Transaldolase from Mannheimia succiniciproducens (strain KCTC 0769BP / MBEL55E).